The chain runs to 150 residues: MSNFLGSHAINMDAKGRLAIPTKVREELAQLCGGRIVLTANADEEKCLLLYPEPEWEVLRPKIEALPNMNKAAKRLQRLILGNAALMELDASGRILVPQTLRNHANLEKRLMLVGLGKKYELWSEESWNAYLDASAADEEMPPEMEALSL.

2 SpoVT-AbrB domains span residues 7 to 55 (SHAI…PEPE) and 84 to 127 (AALM…SEES).

Belongs to the MraZ family. Forms oligomers.

The protein localises to the cytoplasm. Its subcellular location is the nucleoid. The protein is Transcriptional regulator MraZ of Marinobacter nauticus (strain ATCC 700491 / DSM 11845 / VT8) (Marinobacter aquaeolei).